We begin with the raw amino-acid sequence, 760 residues long: Acetyl-CoA decarbonylase/synthase complex subunit alpha 1 (760 aa).

[4Fe-4S] cluster contacts are provided by Cys56, Cys59, Cys60, Cys62, Cys67, and Cys77. His100 is a binding site for CO. Residues His231, Cys259, and Cys298 each coordinate [Ni-4Fe-4S] cluster. 4Fe-4S ferredoxin-type domains follow at residues 381–410 and 418–450; these read KKLQKEAKRCLGCGDCERVCPNDLPIVEAM and FEGLADLFDRCVGCARCESECPTKLRVMNMIED. 8 residues coordinate [4Fe-4S] cluster: Cys390, Cys393, Cys396, Cys400, Cys428, Cys431, Cys434, and Cys438. Positions 496, 525, and 560 each coordinate [Ni-4Fe-4S] cluster.

It belongs to the Ni-containing carbon monoxide dehydrogenase family. In terms of assembly, heterotetramer of two alpha and two epsilon subunits. The ACDS complex is made up of alpha, epsilon, beta, gamma and delta subunits with a probable stoichiometry of (alpha(2)epsilon(2))(4)-beta(8)-(gamma(1)delta(1))(8). The cofactor is [4Fe-4S] cluster. Requires [Ni-4Fe-4S] cluster as cofactor.

It catalyses the reaction CO + 2 oxidized [2Fe-2S]-[ferredoxin] + H2O = 2 reduced [2Fe-2S]-[ferredoxin] + CO2 + 2 H(+). Functionally, part of the ACDS complex that catalyzes the reversible cleavage of acetyl-CoA, allowing autotrophic growth from CO(2). The alpha-epsilon subcomponent functions as a carbon monoxide dehydrogenase. This Methanopyrus kandleri (strain AV19 / DSM 6324 / JCM 9639 / NBRC 100938) protein is Acetyl-CoA decarbonylase/synthase complex subunit alpha 1.